A 157-amino-acid polypeptide reads, in one-letter code: Cyclic pyranopterin monophosphate synthase (157 aa).

Residues 73–75 (LCH) and 110–111 (ME) each bind substrate. Residue Asp-125 is part of the active site.

The protein belongs to the MoaC family. In terms of assembly, homohexamer; trimer of dimers.

The enzyme catalyses (8S)-3',8-cyclo-7,8-dihydroguanosine 5'-triphosphate = cyclic pyranopterin phosphate + diphosphate. It functions in the pathway cofactor biosynthesis; molybdopterin biosynthesis. Catalyzes the conversion of (8S)-3',8-cyclo-7,8-dihydroguanosine 5'-triphosphate to cyclic pyranopterin monophosphate (cPMP). In Pseudomonas fluorescens (strain SBW25), this protein is Cyclic pyranopterin monophosphate synthase.